The primary structure comprises 27 residues: LQCYSCINQVDCTSVINCTXNQDACLY.

2 disulfide bridges follow: Cys-3–Cys-25 and Cys-6–Cys-12. Asn-17 carries an N-linked (GlcNAc...) asparagine glycan.

In terms of assembly, interacts with T-cell surface antigen CD2. N- and O-glycosylated. Expressed in erythrocytes and lymphocytes. Not detected in platelets.

Its subcellular location is the cell membrane. The protein resides in the secreted. Its function is as follows. Potent inhibitor of the complement membrane attack complex (MAC) action, which protects self-cells from damage during complement activation. Acts by binding to the beta-haipins of C8 (C8A and C8B) components of the assembling MAC, forming an intermolecular beta-sheet that prevents incorporation of the multiple copies of C9 required for complete formation of the osmolytic pore. The protein is CD59 glycoprotein of Ovis aries (Sheep).